The following is a 123-amino-acid chain: Defensin beta 118 (123 aa).

Residues 1-19 (MKLLLLALPMLVLLPQVIP) form the signal peptide. 3 cysteine pairs are disulfide-bonded: C27–C54, C34–C48, and C38–C55. Disordered regions lie at residues 59–79 (NEDH…STPG) and 102–123 (MVEE…HHSS). A propeptide spanning residues 64–123 (QVPTTSPTPLSDSTPGSIDDILTVRFTTDYFEVSSKKDMVEESEAGWGTQTSLPDVHHSS) is cleaved from the precursor. A compositionally biased stretch (low complexity) spans 66-79 (PTTSPTPLSDSTPG).

Belongs to the beta-defensin family. The three-dimensional structure formed by the three intramolecular disulfide bridges is indispensable for antimicrobial activity.

Its subcellular location is the secreted. Host defense peptide that exhibits antimicrobial activity against both Gram-negative bacteria, such as E.coli and S.typhimurium, and Gram-positive bacteria, such as S.aureus and B.subtilis. Inhibits cell adhesion of E.coli on intestinal epithelial enterocytes. Causes rapid permeabilization of both the outer and inner membrane of E.coli, leading to morphological alterations on the bacterial surface. Binds to bacterial lipopolysaccharides (LPS) with high affinity, and may thereby be involved in immunoregulation through LPS neutralization. May contribute to epididymal innate immunity and protect the sperm against attack by microorganisms. This is Defensin beta 118 (DEFB118) from Hylobates lar (Lar gibbon).